Consider the following 1358-residue polypeptide: DNA-directed RNA polymerase subunit beta (1358 aa).

The protein belongs to the RNA polymerase beta chain family. As to quaternary structure, the RNAP catalytic core consists of 2 alpha, 1 beta, 1 beta' and 1 omega subunit. When a sigma factor is associated with the core the holoenzyme is formed, which can initiate transcription.

It carries out the reaction RNA(n) + a ribonucleoside 5'-triphosphate = RNA(n+1) + diphosphate. Functionally, DNA-dependent RNA polymerase catalyzes the transcription of DNA into RNA using the four ribonucleoside triphosphates as substrates. This chain is DNA-directed RNA polymerase subunit beta, found in Xanthobacter autotrophicus (strain ATCC BAA-1158 / Py2).